Here is a 206-residue protein sequence, read N- to C-terminus: Large ribosomal subunit protein uL4 (206 aa).

The interval threonine 60 to glycine 84 is disordered. Positions phenylalanine 64–serine 76 are enriched in basic residues.

It belongs to the universal ribosomal protein uL4 family. Part of the 50S ribosomal subunit.

One of the primary rRNA binding proteins, this protein initially binds near the 5'-end of the 23S rRNA. It is important during the early stages of 50S assembly. It makes multiple contacts with different domains of the 23S rRNA in the assembled 50S subunit and ribosome. Functionally, forms part of the polypeptide exit tunnel. The sequence is that of Large ribosomal subunit protein uL4 from Rhodospirillum rubrum (strain ATCC 11170 / ATH 1.1.1 / DSM 467 / LMG 4362 / NCIMB 8255 / S1).